Consider the following 377-residue polypeptide: Cyclin-I (377 aa).

The disordered stretch occupies residues 357–377 (DLSRQEGHASPCPPLQPVSVM). Residues 367–377 (PCPPLQPVSVM) show a composition bias toward pro residues.

It belongs to the cyclin family. In terms of tissue distribution, highest levels in adult heart, brain and skeletal muscle. Lower levels in adult placenta, lung, kidney and pancreas. Also high levels in fetal brain and lower levels in fetal lung, liver and kidney. Also abundant in testis and thyroid.

Its subcellular location is the nucleus membrane. The protein is Cyclin-I of Homo sapiens (Human).